We begin with the raw amino-acid sequence, 140 residues long: 3-hydroxyacyl-[acyl-carrier-protein] dehydratase FabZ (140 aa).

Histidine 47 is a catalytic residue.

It belongs to the thioester dehydratase family. FabZ subfamily.

It localises to the cytoplasm. It catalyses the reaction a (3R)-hydroxyacyl-[ACP] = a (2E)-enoyl-[ACP] + H2O. Involved in unsaturated fatty acids biosynthesis. Catalyzes the dehydration of short chain beta-hydroxyacyl-ACPs and long chain saturated and unsaturated beta-hydroxyacyl-ACPs. The chain is 3-hydroxyacyl-[acyl-carrier-protein] dehydratase FabZ from Streptococcus pneumoniae serotype 4 (strain ATCC BAA-334 / TIGR4).